The chain runs to 284 residues: Transmembrane protein 163b (284 aa).

Residues 1–44 (MTDSSSASDPTAGPVDPGPAPSAPDPALEDPASTPANGHHPNQA) are disordered. Residues 1 to 83 (MTDSSSASDP…HEAQSYRKKA (83 aa)) are Cytoplasmic-facing. A helical membrane pass occupies residues 84–104 (LWVSWVSIVVTMILAIAAFTV). The Extracellular portion of the chain corresponds to 105 to 111 (SIMRHSA). Residues 112–132 (SAFGFAFDATLDVLSSIIVLW) traverse the membrane as a helical segment. Over 133 to 145 (RYSNAAAVHSAHR) the chain is Cytoplasmic. The helical transmembrane segment at 146-166 (EYIACVILGVVFILSAITILV) threads the bilayer. Residues 167–182 (KAIHDLATKLEPEVDD) are Extracellular-facing. Residues 183-203 (FLYSVSVISGVVCTVLCVCKF) form a helical membrane-spanning segment. Topologically, residues 204–212 (MLGKVLTSR) are cytoplasmic. The helical transmembrane segment at 213–233 (ALITDGFNSLVGGVMGFSILI) threads the bilayer. At 234-243 (SAEVFKHEPS) the chain is on the extracellular side. The chain crosses the membrane as a helical span at residues 244-264 (VWFLDGTIGILIGLIILAYGV). Topologically, residues 265 to 284 (KLLKDMVPRIRQTRHYERFE) are cytoplasmic.

It belongs to the TMEM163 family.

The protein resides in the cytoplasmic vesicle. It localises to the secretory vesicle. The protein localises to the synaptic vesicle membrane. Its subcellular location is the early endosome membrane. It is found in the late endosome membrane. The protein resides in the lysosome membrane. It localises to the cell membrane. The catalysed reaction is Zn(2+)(in) = Zn(2+)(out). Its function is as follows. Zinc ion transporter that mediates zinc efflux and plays a crucial role in intracellular zinc homeostasis. Binds the divalent cations Zn(2+), Ni(2+), and to a minor extent Cu(2+). Is a functional modulator of P2X purinoceptors, including P2RX1, P2RX3, P2RX4 and P2RX7. Plays a role in central nervous system development and is required for myelination, and survival and proliferation of oligodendrocytes. This Danio rerio (Zebrafish) protein is Transmembrane protein 163b.